Here is a 356-residue protein sequence, read N- to C-terminus: DNA polymerase IV (356 aa).

Positions 6–187 constitute a UmuC domain; the sequence is IIHVDMDYFF…LDIGDFPGVG (182 aa). Residues Asp-10 and Asp-105 each coordinate Mg(2+). Glu-106 is a catalytic residue.

Belongs to the DNA polymerase type-Y family. Monomer. It depends on Mg(2+) as a cofactor.

It is found in the cytoplasm. It catalyses the reaction DNA(n) + a 2'-deoxyribonucleoside 5'-triphosphate = DNA(n+1) + diphosphate. In terms of biological role, poorly processive, error-prone DNA polymerase involved in untargeted mutagenesis. Copies undamaged DNA at stalled replication forks, which arise in vivo from mismatched or misaligned primer ends. These misaligned primers can be extended by PolIV. Exhibits no 3'-5' exonuclease (proofreading) activity. May be involved in translesional synthesis, in conjunction with the beta clamp from PolIII. This Staphylococcus saprophyticus subsp. saprophyticus (strain ATCC 15305 / DSM 20229 / NCIMB 8711 / NCTC 7292 / S-41) protein is DNA polymerase IV.